Consider the following 695-residue polypeptide: Zinc finger SWIM domain-containing protein 3 (695 aa).

The interval 434 to 490 (NAPKLRRTRLPSTPPRPKKPFRICGGGDTRLPVEEVEETKADSAQSQLPQPQDQSSK) is disordered. Residues 475 to 489 (DSAQSQLPQPQDQSS) show a composition bias toward low complexity. An SWIM-type zinc finger spans residues 530–571 (VAVQLLENSHQVSKDGCSCSCSFQQCYHLPCRHILALLHTSQ).

The polypeptide is Zinc finger SWIM domain-containing protein 3 (Zswim3) (Mus musculus (Mouse)).